The chain runs to 295 residues: Tyrosine recombinase XerC (295 aa).

Residues 1-84 (MTLEEQFLSY…SLKSFYRLLT (84 aa)) enclose the Core-binding (CB) domain. In terms of domain architecture, Tyr recombinase spans 105-289 (KLPEFFYQDE…SMQHLTAEYR (185 aa)). Residues R145, K169, H241, R244, and H267 contribute to the active site. The active-site O-(3'-phospho-DNA)-tyrosine intermediate is the Y276.

It belongs to the 'phage' integrase family. XerC subfamily. As to quaternary structure, forms a cyclic heterotetrameric complex composed of two molecules of XerC and two molecules of XerD.

The protein localises to the cytoplasm. Its function is as follows. Site-specific tyrosine recombinase, which acts by catalyzing the cutting and rejoining of the recombining DNA molecules. The XerC-XerD complex is essential to convert dimers of the bacterial chromosome into monomers to permit their segregation at cell division. It also contributes to the segregational stability of plasmids. This chain is Tyrosine recombinase XerC, found in Lactobacillus leichmannii.